The primary structure comprises 352 residues: Dof zinc finger protein DOF1.8 (352 aa).

The segment at 24-46 is disordered; it reads LKQQSNPPSPATPVERKARPEKD. Basic and acidic residues predominate over residues 37–46; the sequence is VERKARPEKD. Residues 49–103 form a Dof-type zinc finger; sequence LNCPRCNSLNTKFCYYNNYSLTQPRYFCKDCRRYWTAGGSLRNIPVGGGVRKNKR. Zn(2+) is bound by residues C51, C54, C76, and C79. Disordered regions lie at residues 93 to 136 and 265 to 334; these read PVGG…PLPH and GGDP…VGFW. A compositionally biased stretch (low complexity) spans 104 to 129; that stretch reads SSSNSSSSSPSSSSSSKKPLFANNNT. A compositionally biased stretch (basic and acidic residues) spans 310-323; that stretch reads ENNDEHSDHEHEKE.

Its subcellular location is the nucleus. Functionally, transcription factor that binds specifically to a 5'-AA[AG]G-3' consensus core sequence. This chain is Dof zinc finger protein DOF1.8 (DOF1.8), found in Arabidopsis thaliana (Mouse-ear cress).